We begin with the raw amino-acid sequence, 506 residues long: Ribose import ATP-binding protein RbsA 2 (506 aa).

2 ABC transporter domains span residues 7-242 and 250-497; these read LEMR…VGRP and ERDI…TGVN. 39-46 is a binding site for ATP; the sequence is GENGAGKS.

Belongs to the ABC transporter superfamily. Ribose importer (TC 3.A.1.2.1) family. As to quaternary structure, the complex is composed of an ATP-binding protein (RbsA), two transmembrane proteins (RbsC) and a solute-binding protein (RbsB).

It is found in the cell inner membrane. It carries out the reaction D-ribose(out) + ATP + H2O = D-ribose(in) + ADP + phosphate + H(+). In terms of biological role, part of the ABC transporter complex RbsABC involved in ribose import. Responsible for energy coupling to the transport system. This Escherichia coli O157:H7 protein is Ribose import ATP-binding protein RbsA 2.